The chain runs to 264 residues: Thymidylate synthase (264 aa).

R21 contributes to the dUMP binding site. H51 provides a ligand contact to (6R)-5,10-methylene-5,6,7,8-tetrahydrofolate. Residue 126–127 coordinates dUMP; the sequence is RR. Catalysis depends on C146, which acts as the Nucleophile. DUMP is bound by residues 166–169, N177, and 207–209; these read RSCD and HLY. D169 contributes to the (6R)-5,10-methylene-5,6,7,8-tetrahydrofolate binding site. A263 serves as a coordination point for (6R)-5,10-methylene-5,6,7,8-tetrahydrofolate.

Belongs to the thymidylate synthase family. Bacterial-type ThyA subfamily. In terms of assembly, homodimer.

It is found in the cytoplasm. The enzyme catalyses dUMP + (6R)-5,10-methylene-5,6,7,8-tetrahydrofolate = 7,8-dihydrofolate + dTMP. It participates in pyrimidine metabolism; dTTP biosynthesis. Its function is as follows. Catalyzes the reductive methylation of 2'-deoxyuridine-5'-monophosphate (dUMP) to 2'-deoxythymidine-5'-monophosphate (dTMP) while utilizing 5,10-methylenetetrahydrofolate (mTHF) as the methyl donor and reductant in the reaction, yielding dihydrofolate (DHF) as a by-product. This enzymatic reaction provides an intracellular de novo source of dTMP, an essential precursor for DNA biosynthesis. The sequence is that of Thymidylate synthase from Shewanella sp. (strain ANA-3).